A 204-amino-acid polypeptide reads, in one-letter code: VQ motif-containing protein 13 (204 aa).

Basic and acidic residues predominate over residues 1-12 (MEKSPRYRDKAK). The interval 1 to 26 (MEKSPRYRDKAKNLLPSPSSCTTTPT) is disordered. The span at 16 to 26 (PSPSSCTTTPT) shows a compositional bias: low complexity. S17 carries the post-translational modification Phosphoserine. The short motif at 46–55 (FKQVVQLLTG) is the VQ element. The disordered stretch occupies residues 56 to 90 (IPKNPTHQPDPRFPPFHSIPPIKAVTNKKQSSSFR). Phosphoserine is present on residues S73 and S128. Position 131 is a phosphothreonine (T131). The interval 133–204 (LMSDPFYRPG…HSPAPSPHDH (72 aa)) is disordered. Residues 143–152 (SFSQSPSDSK) show a composition bias toward low complexity. S147 and S173 each carry phosphoserine. T177 and T192 each carry phosphothreonine. S196 and S200 each carry phosphoserine.

Phosphorylated on serine and threonine residues by MPK6.

The protein resides in the nucleus. May modulate WRKY transcription factor activities. This is VQ motif-containing protein 13 from Arabidopsis thaliana (Mouse-ear cress).